The following is a 520-amino-acid chain: Aldehyde dehydrogenase 5, mitochondrial (520 aa).

Residues methionine 1 to tyrosine 23 constitute a mitochondrion transit peptide. NAD(+) is bound at residue glycine 266–glycine 271. Glutamate 288 serves as the catalytic Proton acceptor. Cysteine 322 (nucleophile) is an active-site residue.

This sequence belongs to the aldehyde dehydrogenase family.

The protein resides in the mitochondrion matrix. The enzyme catalyses an aldehyde + NADP(+) + H2O = a carboxylate + NADPH + 2 H(+). It carries out the reaction an aldehyde + NAD(+) + H2O = a carboxylate + NADH + 2 H(+). Its pathway is alcohol metabolism; ethanol degradation; acetate from ethanol: step 2/2. Induced by potassium ions. In terms of biological role, minor mitochondrial aldehyde dehydrogenase isoform. Plays a role in regulation or biosynthesis of electron transport chain components. Involved in the biosynthesis of acetate during anaerobic growth on glucose. This is Aldehyde dehydrogenase 5, mitochondrial (ALD5) from Saccharomyces cerevisiae (strain YJM789) (Baker's yeast).